The chain runs to 350 residues: Inhibin beta E chain (350 aa).

Positions 1–19 (MRLPDVQLWLVLLWALVRA) are cleaved as a signal peptide. The propeptide occupies 20-236 (QGTGSVCPSC…EPGAGRARRR (217 aa)). N-linked (GlcNAc...) asparagine glycosylation occurs at N198. Disulfide bonds link C240–C248, C247–C315, C276–C347, and C280–C349.

It belongs to the TGF-beta family. In terms of assembly, homodimeric or heterodimeric through association with alpha and beta subunits, linked by one or more disulfide bonds. Inhibins are heterodimers of one alpha and one beta subunit. Activins are homo- or heterodimers of beta subunits only.

It is found in the secreted. Inhibins and activins inhibit and activate, respectively, the secretion of follitropin by the pituitary gland. Inhibins/activins are involved in regulating a number of diverse functions such as hypothalamic and pituitary hormone secretion, gonadal hormone secretion, germ cell development and maturation, erythroid differentiation, insulin secretion, nerve cell survival, embryonic axial development or bone growth, depending on their subunit composition. Inhibins appear to oppose the functions of activins. Its function is as follows. Activin E is a homodimer of INHBE secreted by the liver that plays a crucial role in regulating metabolic homeostasis particularly in lipid metabolism and energy homeostasis. Plays a central role in the regulation of adipose tissue lipolysis by preventing the influx of fatty acids from adipose tissue into the liver. Mechanistically, signals via ACVR1C to activate SMAD2/3 signaling, suppressing PPARG target genes in adipose tissue, thereby reducing liver lipid content and improving glycemic control. Induces beige adipocyte formation and thermogenesis in response to cold exposure. The protein is Inhibin beta E chain (INHBE) of Homo sapiens (Human).